The chain runs to 427 residues: MTAIVDIIGREILDSRGNPTVEVDVVLEDGSVGRAAVPSGASTGAHEAVELRDGDKARYLGKGVQKAVEAVNGELFDALGGMDAEQQVQIDQTMIELDGTPNKGRIGANAILGVSLAAAKAAAASYDMPLYRYVGGTSARTLPVPMMNIVNGGVHADNPIDFQEFMIMPVGAPTFADALRCGSEIFHTLKGELKKAGHNTNVGDEGGFAPNLPSADAALDFVMAAIGKAGYKAGGDVMLALDCAATEFFKDGSYVYGGENKTRSRSEQAKYLADLVARYPIVSIEDGMSEDDMDGWKELTDLIGSKCQLVGDDLFVTNVTRLADGIKNGRANSILIKVNQIGTLTETLAAVEMAHKAGYTAVMSHRSGETEDSTIADLAVATNCGQIKTGSLARADRTAKYNQLLRIEQELGAHAHYAGKAALKALR.

Position 163 (Q163) interacts with (2R)-2-phosphoglycerate. Residue E205 is the Proton donor of the active site. Mg(2+)-binding residues include D242, E285, and D312. Residues K337, R366, S367, and K388 each contribute to the (2R)-2-phosphoglycerate site. The Proton acceptor role is filled by K337.

Belongs to the enolase family. The cofactor is Mg(2+).

The protein resides in the cytoplasm. The protein localises to the secreted. It is found in the cell surface. It carries out the reaction (2R)-2-phosphoglycerate = phosphoenolpyruvate + H2O. The protein operates within carbohydrate degradation; glycolysis; pyruvate from D-glyceraldehyde 3-phosphate: step 4/5. Its function is as follows. Catalyzes the reversible conversion of 2-phosphoglycerate (2-PG) into phosphoenolpyruvate (PEP). It is essential for the degradation of carbohydrates via glycolysis. The protein is Enolase of Rhodopseudomonas palustris (strain ATCC BAA-98 / CGA009).